Here is a 422-residue protein sequence, read N- to C-terminus: Keratin, type I cytoskeletal 23 (422 aa).

A compositionally biased stretch (polar residues) spans methionine 1 to arginine 24. Positions methionine 1–histidine 35 are disordered. A head region spans residues methionine 1 to asparagine 71. Residues glycine 72–tryptophan 107 form a coil 1A region. Residues glycine 72–threonine 382 enclose the IF rod domain. The segment at histidine 108 to asparagine 125 is linker 1. The coil 1B stretch occupies residues isoleucine 126–asparagine 217. Positions histidine 218 to valine 240 are linker 12. The coil 2 stretch occupies residues leucine 241–aspartate 378. A rod-like helical tail region spans residues threonine 379–isoleucine 422.

It belongs to the intermediate filament family. In terms of assembly, heterotetramer of two type I and two type II keratins.

The sequence is that of Keratin, type I cytoskeletal 23 (Krt23) from Mus musculus (Mouse).